Here is a 286-residue protein sequence, read N- to C-terminus: Deleted in azoospermia-like (286 aa).

Residues 30–105 form the RRM domain; the sequence is NTVFVGGIDI…KKLKLGPAIR (76 aa). In terms of domain architecture, DAZ spans 155 to 180; that stretch reads ACPYPSSPPMAIQQIPVGCQQPSYFQ.

This sequence belongs to the RRM DAZ family. Interacts with the C-terminus of pabp1 and with epabp. Prior to oocyte maturation, found in a complex with epabp and pum2 proteins and spdy1 mRNA; pum2 dissociates from the complex during maturation. In terms of tissue distribution, germ-line specific; expressed in adult testis and ovary. Localized specifically to the oocyte and embryonic germ plasm and to migrating primordial germ cells (PGCs).

The protein localises to the cytoplasm. Functionally, RNA-binding protein that is required for primordial germ cell (PGC) differentiation and indirectly necessary for the migration of PGCs through the endoderm. May promote meiotic cell division during spermatogenesis. Shows a preference for G- and U-rich RNAs and probably binds the 3'-UTR of target mRNAs. Stimulates the initiation of translation of mRNAs through the recruitment of poly(A)-binding proteins (PABPs). This Xenopus tropicalis (Western clawed frog) protein is Deleted in azoospermia-like.